A 343-amino-acid chain; its full sequence is Anthranilate phosphoribosyltransferase (343 aa).

5-phospho-alpha-D-ribose 1-diphosphate contacts are provided by residues Gly83, 86 to 87 (GD), Thr91, 93 to 96 (NIST), 111 to 119 (KHGGRSVSS), and Ser123. Residue Gly83 coordinates anthranilate. Ser95 serves as a coordination point for Mg(2+). Arg169 is a binding site for anthranilate. Asp228 and Glu229 together coordinate Mg(2+).

This sequence belongs to the anthranilate phosphoribosyltransferase family. In terms of assembly, homodimer. Mg(2+) is required as a cofactor.

The enzyme catalyses N-(5-phospho-beta-D-ribosyl)anthranilate + diphosphate = 5-phospho-alpha-D-ribose 1-diphosphate + anthranilate. The protein operates within amino-acid biosynthesis; L-tryptophan biosynthesis; L-tryptophan from chorismate: step 2/5. In terms of biological role, catalyzes the transfer of the phosphoribosyl group of 5-phosphorylribose-1-pyrophosphate (PRPP) to anthranilate to yield N-(5'-phosphoribosyl)-anthranilate (PRA). The polypeptide is Anthranilate phosphoribosyltransferase (Thiobacillus denitrificans (strain ATCC 25259 / T1)).